The following is a 461-amino-acid chain: Adenine DNA glycosylase (461 aa).

The Proton donor/acceptor role is filled by Glu69. Residues Cys226, Cys233, Cys236, and Cys242 each contribute to the [4Fe-4S] cluster site. One can recognise a Nudix hydrolase domain in the interval 296 to 437 (QREERALVVI…RAALEIKKRK (142 aa)). The short motif at 340-366 (FGQESWPKDMDAEFQKSIAQWISNDSR) is the Nudix box element.

The protein belongs to the Nth/MutY family. Monomer. [4Fe-4S] cluster serves as cofactor.

It catalyses the reaction Hydrolyzes free adenine bases from 7,8-dihydro-8-oxoguanine:adenine mismatched double-stranded DNA, leaving an apurinic site.. Adenine glycosylase active on G-A mispairs. Has glycosylase and nicking activities and is active at A/G and A/GO sites. The polypeptide is Adenine DNA glycosylase (myh1) (Schizosaccharomyces pombe (strain 972 / ATCC 24843) (Fission yeast)).